A 515-amino-acid chain; its full sequence is Ribose import ATP-binding protein RbsA 1 (515 aa).

ABC transporter domains are found at residues 8–244 (FQME…IGRE) and 256–503 (VPAT…LNIH). Position 40 to 47 (40 to 47 (GENGAGKS)) interacts with ATP.

The protein belongs to the ABC transporter superfamily. Ribose importer (TC 3.A.1.2.1) family. The complex is composed of an ATP-binding protein (RbsA), two transmembrane proteins (RbsC) and a solute-binding protein (RbsB).

It localises to the cell inner membrane. It carries out the reaction D-ribose(out) + ATP + H2O = D-ribose(in) + ADP + phosphate + H(+). In terms of biological role, part of the ABC transporter complex RbsABC involved in ribose import. Responsible for energy coupling to the transport system. The sequence is that of Ribose import ATP-binding protein RbsA 1 from Mesorhizobium japonicum (strain LMG 29417 / CECT 9101 / MAFF 303099) (Mesorhizobium loti (strain MAFF 303099)).